The primary structure comprises 171 residues: NADH-quinone oxidoreductase subunit B 1 (171 aa).

The [4Fe-4S] cluster site is built by cysteine 44, cysteine 45, cysteine 110, and cysteine 139.

Belongs to the complex I 20 kDa subunit family. NDH-1 is composed of 14 different subunits. Subunits NuoB, C, D, E, F, and G constitute the peripheral sector of the complex. It depends on [4Fe-4S] cluster as a cofactor.

It localises to the cell inner membrane. The catalysed reaction is a quinone + NADH + 5 H(+)(in) = a quinol + NAD(+) + 4 H(+)(out). NDH-1 shuttles electrons from NADH, via FMN and iron-sulfur (Fe-S) centers, to quinones in the respiratory chain. The immediate electron acceptor for the enzyme in this species is believed to be ubiquinone. Couples the redox reaction to proton translocation (for every two electrons transferred, four hydrogen ions are translocated across the cytoplasmic membrane), and thus conserves the redox energy in a proton gradient. The polypeptide is NADH-quinone oxidoreductase subunit B 1 (Opitutus terrae (strain DSM 11246 / JCM 15787 / PB90-1)).